A 134-amino-acid chain; its full sequence is Methylglyoxal synthase (134 aa).

The 134-residue stretch at 1–134 (MHIALIAHDE…DWRDLRRNDE (134 aa)) folds into the MGS-like domain. Residues H8, K12, 34-37 (TGTT), and 54-55 (SG) each bind substrate. Residue D60 is the Proton donor/acceptor of the active site. Position 87 (H87) interacts with substrate.

This sequence belongs to the methylglyoxal synthase family.

The enzyme catalyses dihydroxyacetone phosphate = methylglyoxal + phosphate. Functionally, catalyzes the formation of methylglyoxal from dihydroxyacetone phosphate. The sequence is that of Methylglyoxal synthase from Listeria welshimeri serovar 6b (strain ATCC 35897 / DSM 20650 / CCUG 15529 / CIP 8149 / NCTC 11857 / SLCC 5334 / V8).